The sequence spans 317 residues: MLGTSLSPHHENFWAVIKSYYQLTKPRIIPLLLITTAASMWIASHGHIDPVKLLITLLGGTLAAASAQTLNCIYDQDIDFSMQRTRKRPIPSGRVQPRHALIFALILGSLSFSLLMVFVNLLSACLALSGIVFYMLVYTHWLKRHHVQNIVIGGAAGSIPPLVGWAAVTGQLDWSAWILFALIFLWTPPHFWALALMIKEDYAEVEVPMLPVVKGEKITVDQIWIYTLIVVPFSLLLVFPFQASGLFYAIAALVLGAIFIQKAWELKQNPFDQSLAKSMFKYSILYMMLLCTAMVVDSLPAVHDVTALVTTTLASLT.

A run of 9 helical transmembrane segments spans residues 28–48, 53–73, 101–121, 122–142, 150–170, 178–198, 223–243, 246–266, and 282–302; these read IIPLLLITTAASMWIASHGHI, LLITLLGGTLAAASAQTLNCI, LIFALILGSLSFSLLMVFVNL, LSACLALSGIVFYMLVYTHWL, IVIGGAAGSIPPLVGWAAVTG, ILFALIFLWTPPHFWALALMI, IWIYTLIVVPFSLLLVFPFQA, LFYAIAALVLGAIFIQKAWEL, and YSILYMMLLCTAMVVDSLPAV.

The protein belongs to the UbiA prenyltransferase family. Protoheme IX farnesyltransferase subfamily.

The protein localises to the cell inner membrane. The enzyme catalyses heme b + (2E,6E)-farnesyl diphosphate + H2O = Fe(II)-heme o + diphosphate. The protein operates within porphyrin-containing compound metabolism; heme O biosynthesis; heme O from protoheme: step 1/1. In terms of biological role, converts heme B (protoheme IX) to heme O by substitution of the vinyl group on carbon 2 of heme B porphyrin ring with a hydroxyethyl farnesyl side group. This chain is Protoheme IX farnesyltransferase, found in Picosynechococcus sp. (strain ATCC 27264 / PCC 7002 / PR-6) (Agmenellum quadruplicatum).